Consider the following 57-residue polypeptide: Non-structural protein 3a (57 aa).

The N-terminal stretch at 1 to 22 (MIQSPTSFLIVLILLWCKLVLS) is a signal peptide.

Functionally, involved in resistance to IFN. This chain is Non-structural protein 3a, found in Avian infectious bronchitis virus (strain Portugal/322/82) (IBV).